The following is an 885-amino-acid chain: Cytosolic carboxypeptidase-like protein 5 (885 aa).

The Peptidase M14 domain occupies 157–570 (YPFSYSDCQD…AMAIAALDMA (414 aa)). Residues histidine 252 and glutamate 255 each coordinate Zn(2+). The interval 343–402 (NSQSPSEHQHSSHLPPDAPLSDPEKADSLQNRAHLGRSSSGDKPEAWTQTEVAEQKPNSV) is disordered. The span at 388 to 402 (AWTQTEVAEQKPNSV) shows a compositional bias: polar residues. Histidine 434 contacts Zn(2+). Glutamate 516 serves as the catalytic Proton donor/acceptor. Disordered regions lie at residues 605 to 733 (TTVN…LASS) and 783 to 839 (RLQA…PRPC). The span at 620–640 (PPRSNNGLPVSCSENTLSRAR) shows a compositional bias: polar residues. Low complexity-rich tracts occupy residues 641–666 (SFST…NSPS) and 714–733 (PTSS…LASS). A Phosphoserine modification is found at serine 840.

This sequence belongs to the peptidase M14 family. The cofactor is Zn(2+).

It localises to the cytoplasm. It is found in the cytosol. Its subcellular location is the nucleus. The protein localises to the cytoskeleton. The protein resides in the spindle. It localises to the midbody. It catalyses the reaction gamma-L-glutamyl-L-glutamyl-[protein] + H2O = L-glutamyl-[protein] + L-glutamate. The enzyme catalyses (L-glutamyl)(n+1)-gamma-L-glutamyl-L-glutamyl-[protein] + H2O = (L-glutamyl)(n)-gamma-L-glutamyl-L-glutamyl-[protein] + L-glutamate. It carries out the reaction C-terminal L-alpha-aminoacyl-L-glutamyl-[tubulin] + H2O = C-terminal L-alpha-aminoacyl-[tubulin] + L-glutamate. The catalysed reaction is C-terminal L-alpha-aminoacyl-L-glutamyl-L-glutamyl-[tubulin] + H2O = C-terminal L-alpha-aminoacyl-L-glutamyl-[tubulin] + L-glutamate. Functionally, metallocarboxypeptidase that mediates deglutamylation of tubulin and non-tubulin target proteins. Catalyzes the removal of polyglutamate side chains present on the gamma-carboxyl group of glutamate residues within the C-terminal tail of alpha- and beta-tubulin. Cleaves alpha- and gamma-linked polyglutamate tubulin side-chain, as well as the branching point glutamate. Also catalyzes the removal of alpha-linked glutamate residues from the carboxy-terminus of alpha-tubulin. Mediates deglutamylation of nucleotidyltransferase CGAS, leading to CGAS antiviral defense response activation. The chain is Cytosolic carboxypeptidase-like protein 5 (AGBL5) from Bos taurus (Bovine).